We begin with the raw amino-acid sequence, 340 residues long: Phosphoribosylformylglycinamidine cyclo-ligase (340 aa).

The protein belongs to the AIR synthase family.

The protein resides in the cytoplasm. The catalysed reaction is 2-formamido-N(1)-(5-O-phospho-beta-D-ribosyl)acetamidine + ATP = 5-amino-1-(5-phospho-beta-D-ribosyl)imidazole + ADP + phosphate + H(+). It participates in purine metabolism; IMP biosynthesis via de novo pathway; 5-amino-1-(5-phospho-D-ribosyl)imidazole from N(2)-formyl-N(1)-(5-phospho-D-ribosyl)glycinamide: step 2/2. In Streptococcus pneumoniae (strain 70585), this protein is Phosphoribosylformylglycinamidine cyclo-ligase.